Here is a 238-residue protein sequence, read N- to C-terminus: Ubiquinone biosynthesis O-methyltransferase (238 aa).

S-adenosyl-L-methionine-binding residues include Arg38, Gly57, Asp78, and Leu124.

Belongs to the methyltransferase superfamily. UbiG/COQ3 family.

It catalyses the reaction a 3-demethylubiquinol + S-adenosyl-L-methionine = a ubiquinol + S-adenosyl-L-homocysteine + H(+). The catalysed reaction is a 3-(all-trans-polyprenyl)benzene-1,2-diol + S-adenosyl-L-methionine = a 2-methoxy-6-(all-trans-polyprenyl)phenol + S-adenosyl-L-homocysteine + H(+). It participates in cofactor biosynthesis; ubiquinone biosynthesis. Functionally, O-methyltransferase that catalyzes the 2 O-methylation steps in the ubiquinone biosynthetic pathway. This Marinobacter nauticus (strain ATCC 700491 / DSM 11845 / VT8) (Marinobacter aquaeolei) protein is Ubiquinone biosynthesis O-methyltransferase.